Consider the following 97-residue polypeptide: Aspartyl/glutamyl-tRNA(Asn/Gln) amidotransferase subunit C (97 aa).

Residues 74-84 (TPEEATAAAPA) are compositionally biased toward low complexity. The segment at 74-97 (TPEEATAAAPAREGTAFKVPRIIE) is disordered.

It belongs to the GatC family. In terms of assembly, heterotrimer of A, B and C subunits.

The enzyme catalyses L-glutamyl-tRNA(Gln) + L-glutamine + ATP + H2O = L-glutaminyl-tRNA(Gln) + L-glutamate + ADP + phosphate + H(+). The catalysed reaction is L-aspartyl-tRNA(Asn) + L-glutamine + ATP + H2O = L-asparaginyl-tRNA(Asn) + L-glutamate + ADP + phosphate + 2 H(+). Allows the formation of correctly charged Asn-tRNA(Asn) or Gln-tRNA(Gln) through the transamidation of misacylated Asp-tRNA(Asn) or Glu-tRNA(Gln) in organisms which lack either or both of asparaginyl-tRNA or glutaminyl-tRNA synthetases. The reaction takes place in the presence of glutamine and ATP through an activated phospho-Asp-tRNA(Asn) or phospho-Glu-tRNA(Gln). In Anaeromyxobacter dehalogenans (strain 2CP-1 / ATCC BAA-258), this protein is Aspartyl/glutamyl-tRNA(Asn/Gln) amidotransferase subunit C.